Consider the following 178-residue polypeptide: MKKNIHILGASGVGTSTLGAALSKRLPHTHLDTDNYYWLDKFTKKREIPERRKLLEKDLTINEKWILSGAVCGWGDNLKSYFDLVVFLWIPQDIRLERLRHREFQRYGNEVLAGGSKYEQSKTFLEWASLYDNAGMEVRSRALHEHWMADLSCPVLKIEDDCSVNERVDRVLDYLSSN.

Positions 1-19 (MKKNIHILGASGVGTSTLG) are cleaved as a signal peptide.

This is an uncharacterized protein from Bacillus subtilis (strain 168).